The primary structure comprises 510 residues: NAD(P)H-quinone oxidoreductase subunit 2 B, chloroplastic (510 aa).

The next 13 membrane-spanning stretches (helical) occupy residues 24-44, 57-77, 99-119, 124-144, 149-169, 183-203, 227-247, 295-315, 323-343, 354-374, 395-415, 418-438, and 484-504; these read LLLFDGSLIFPECILIFGLIL, IPWLYFISSTSLVMSITSLLF, IFQFLILLCSTLCIPLSVEYI, MAITEFLLFVLTATIGGMFLC, LITIFVAPECFSLCSYLLSGY, YLLMGGASSSILVHGFSWLYG, PGISIALIFITVGIGFKLSPA, WHLLLEILAILSMILGNLIAI, MLAYSSIGQIGYVIIGIIVGD, YMLFYISMNLGTFACIVLFGL, ALSLALCLLSLGGLPPLAGFF, LYLFWCGWQAGLYFLVLIGLL, and MIVCVIASTIPGISMNPIIAI.

This sequence belongs to the complex I subunit 2 family. NDH is composed of at least 16 different subunits, 5 of which are encoded in the nucleus.

It is found in the plastid. Its subcellular location is the chloroplast thylakoid membrane. The enzyme catalyses a plastoquinone + NADH + (n+1) H(+)(in) = a plastoquinol + NAD(+) + n H(+)(out). It carries out the reaction a plastoquinone + NADPH + (n+1) H(+)(in) = a plastoquinol + NADP(+) + n H(+)(out). NDH shuttles electrons from NAD(P)H:plastoquinone, via FMN and iron-sulfur (Fe-S) centers, to quinones in the photosynthetic chain and possibly in a chloroplast respiratory chain. The immediate electron acceptor for the enzyme in this species is believed to be plastoquinone. Couples the redox reaction to proton translocation, and thus conserves the redox energy in a proton gradient. This chain is NAD(P)H-quinone oxidoreductase subunit 2 B, chloroplastic, found in Lactuca sativa (Garden lettuce).